The primary structure comprises 1200 residues: NACHT, LRR and PYD domains-containing protein 5 (1200 aa).

In terms of domain architecture, Pyrin spans 57 to 148 (SLTFSSYGLQ…SEKARDDMKR (92 aa)). Basic and acidic residues predominate over residues 142 to 152 (ARDDMKRHSPE). The segment at 142–232 (ARDDMKRHSP…TEEQGHGGDT (91 aa)) is disordered. Polar residues predominate over residues 173–182 (QAVQQDSATA). 2 stretches are compositionally biased toward low complexity: residues 192–202 (QAMEQEGATAA) and 209–221 (ISQA…ATAA). Residues 280–602 (RTVVLHGKSG…ALYYVLEGLE (323 aa)) form the NACHT domain. ATP is bound at residue 286-293 (GKSGIGKS). LRR repeat units follow at residues 704-727 (LNSF…SFCL), 730-753 (CPYL…AEAC), 780-803 (HPHL…TLCA), 809-832 (TCKI…LWRI), 836-863 (NRNL…ALKH), 865-892 (KCLL…ILTT), 893-916 (SPSL…PLSD), 950-973 (NRSL…LLCR), 979-1002 (HCSL…FLAL), 1007-1034 (NSWL…VMRE), 1036-1059 (SCHL…SLSC), 1064-1092 (SRHL…LKQK), and 1121-1142 (NRHL…MMKL).

It belongs to the NLRP family. Component of the subcortical maternal complex (SCMC), at least composed of NLRP5, KHDC3, OOEP, and TLE6 isoform 1. Within the complex, interacts with OOEP, KHDC3L and TLE6. The SCMC may facilitate translocation of its components between the nuclear and cytoplasmic compartments. As part of the SCMC interacts with the SCMC-associated protein ZBED3. As part of the SCMC interacts with the SCMC-associated protein CFL1/Cofilin-1. Interacts with PRKCE. Interacts with TUBB3 at cytoskeleton microtubules. Phosphorylated by PRKCE. Expressed in cumulus cells (at protein level). Highly abundant in oocytes and early embryos, however poorly expressed in somatic tissues such as the liver and spinal cord.

The protein resides in the cytoplasm. It is found in the cytoplasmic vesicle. The protein localises to the secretory vesicle. Its subcellular location is the cortical granule. It localises to the mitochondrion. The protein resides in the nucleus. It is found in the nucleolus. The protein localises to the golgi apparatus. Functionally, component of the subcortical maternal complex (SCMC), a multiprotein complex that plays a key role in early embryonic development. The SCMC complex is a structural constituent of cytoplasmic lattices, which consist in fibrous structures found in the cytoplasm of oocytes and preimplantation embryos. They are required to store maternal proteins critical for embryonic development, such as proteins that control epigenetic reprogramming of the preimplantation embryo, and prevent their degradation or activation. Required for the localization of cortical granules to the cortex of oocytes, via association with the cortical actin scaffold. Required for cortical actin clearance prior to oocyte exocytosis and prevention of polyspermy. Involved in regulating post-fertilization Ca(2+) release and endoplasmic reticulum storage (ER) storage via regulation of cellular localization. May be involved in the localization of mitochondria to the cytoplasm and perinuclear region in oocytes and early stage embryos, independent of its role in CPL formation. The polypeptide is NACHT, LRR and PYD domains-containing protein 5 (NLRP5) (Homo sapiens (Human)).